The chain runs to 598 residues: (+)-bornyl diphosphate synthase, chloroplastic (598 aa).

Residues 1–54 (MSIISMNVSILSKPLNCLHNLERRPSKALLVPCTAPTARLRASCSSKLQEAHQI) constitute a chloroplast transit peptide. Arginine 314 is a binding site for substrate. Residues aspartate 351 and aspartate 355 each contribute to the Mg(2+) site. A DDXXD motif motif is present at residues 351–355 (DDIYD). Arginine 493 is a substrate binding site. Residues aspartate 496, threonine 500, and glutamate 504 each contribute to the Mg(2+) site. Position 500 (threonine 500) interacts with substrate. Residue lysine 512 coordinates substrate.

It belongs to the terpene synthase family. In terms of assembly, homodimer. The cofactor is Mg(2+).

It localises to the plastid. The protein resides in the chloroplast. It carries out the reaction (2E)-geranyl diphosphate = (2S,4R)-bornyl diphosphate. The enzyme catalyses (2E)-geranyl diphosphate = (1R,4S)-camphene + diphosphate. It catalyses the reaction (2E)-geranyl diphosphate = (1R,5R)-alpha-pinene + diphosphate. Its pathway is terpene metabolism; (R)-camphor biosynthesis. In terms of biological role, catalyzes the formation of the (+)-camphor precursor (+)-bornyl diphosphate from geranyl diphosphate. The enzyme also produces significant amounts of (+)-alpha-pinene, (+)-camphene, and (+-)-limonene. This Salvia officinalis (Sage) protein is (+)-bornyl diphosphate synthase, chloroplastic.